The following is a 330-amino-acid chain: Laforin (330 aa).

In terms of domain architecture, CBM20 spans 1–123 (MLFRFGVVVP…DNLVDGVYCL (123 aa)). Position 25 is a phosphoserine; by AMPK (serine 25). Substrate-binding positions include tryptophan 32, lysine 86, 102–106 (GPHHD), aspartate 196, aspartate 234, and arginine 240. The Tyrosine-protein phosphatase domain occupies 155–322 (HYSRILPNIW…QQDFSQKFGK (168 aa)). The Phosphocysteine intermediate role is filled by cysteine 265. A Glucan phosphatase signature motif CXAGXGR motif is present at residues 265 to 271 (CNAGVGR). Residues 266 to 271 (NAGVGR) and tyrosine 303 each bind substrate.

This sequence belongs to the protein-tyrosine phosphatase family. As to quaternary structure, homodimer. Interacts with PPP1R3B, PPP1R3C, HIRIP5, and EPM2AIP1. Binds glycogen and Lafora bodies. Interacts with NHLRC1/malin (via the NHL repeats). Forms a complex with NHLRC1/malin and HSP70. Interacts with PPP1R3D; in the presence of NHLC1/malin the interaction leads to ubiquitination and autophagic degradation of PPP1R3D. Interacts (via the phosphatase domain) with MAPT/Tau; the interaction dephosphorylates MAPT. Interacts with PRDM8. Post-translationally, polyubiquitinated by NHLRC1/malin. Phosphorylation on Ser-25 by AMPK affects the phosphatase activity of the enzyme and its ability to homodimerize and interact with NHLRC1, PPP1R3C or PRKAA2. Detected in skeletal muscle and in brain (at protein level). Widely expressed. Higher levels of expression are found in heart, brain, liver, skeletal muscle and kidney.

Its subcellular location is the cytoplasm. It localises to the endoplasmic reticulum membrane. It is found in the cell membrane. It catalyses the reaction O-phospho-L-tyrosyl-[protein] + H2O = L-tyrosyl-[protein] + phosphate. The catalysed reaction is O-phospho-L-seryl-[protein] + H2O = L-seryl-[protein] + phosphate. It carries out the reaction O-phospho-L-threonyl-[protein] + H2O = L-threonyl-[protein] + phosphate. Its function is as follows. Plays an important role in preventing glycogen hyperphosphorylation and the formation of insoluble aggregates, via its activity as glycogen phosphatase, and by promoting the ubiquitination of proteins involved in glycogen metabolism via its interaction with the E3 ubiquitin ligase NHLRC1/malin. Dephosphorylates phosphotyrosine and synthetic substrates, such as para-nitrophenylphosphate (pNPP), and has low activity with phosphoserine and phosphothreonine substrates (in vitro). Has also been shown to dephosphorylate MAPT. Shows strong phosphatase activity towards complex carbohydrates in vitro, avoiding glycogen hyperphosphorylation which is associated with reduced branching and formation of insoluble aggregates. Forms a complex with NHLRC1/malin and HSP70, which suppresses the cellular toxicity of misfolded proteins by promoting their degradation through the ubiquitin-proteasome system (UPS). Acts as a scaffold protein to facilitate PPP1R3C/PTG ubiquitination by NHLRC1/malin. Also promotes proteasome-independent protein degradation through the macroautophagy pathway. The chain is Laforin (Epm2a) from Mus musculus (Mouse).